We begin with the raw amino-acid sequence, 111 residues long: Ig kappa chain V-III region PC 6684 (111 aa).

The segment at 1 to 23 (DIVLTQSPASLAVSLGQRATISC) is framework-1. Cys23 and Cys92 are disulfide-bonded. A complementarity-determining-1 region spans residues 24–38 (RASKSVSTSGYSYMH). Residues 39–53 (WYQQKPGQPPKLLIY) form a framework-2 region. Residues 54-60 (LASNLES) form a complementarity-determining-2 region. The tract at residues 61–92 (GVPARFSGSGSGTDFTLNIHPVEEEDAATYYC) is framework-3. The complementarity-determining-3 stretch occupies residues 93–101 (QHSRELPRT). The segment at 102–111 (FGGGTKLEIK) is framework-4.

This Mus musculus (Mouse) protein is Ig kappa chain V-III region PC 6684.